We begin with the raw amino-acid sequence, 202 residues long: 7-methyl-GTP pyrophosphatase (202 aa).

Residue Asp70 is the Proton acceptor of the active site.

The protein belongs to the Maf family. YceF subfamily. A divalent metal cation is required as a cofactor.

Its subcellular location is the cytoplasm. The catalysed reaction is N(7)-methyl-GTP + H2O = N(7)-methyl-GMP + diphosphate + H(+). Nucleoside triphosphate pyrophosphatase that hydrolyzes 7-methyl-GTP (m(7)GTP). May have a dual role in cell division arrest and in preventing the incorporation of modified nucleotides into cellular nucleic acids. The protein is 7-methyl-GTP pyrophosphatase of Pseudoalteromonas translucida (strain TAC 125).